Reading from the N-terminus, the 221-residue chain is Eukaryotic translation initiation factor 3 subunit K (221 aa).

Residues 46–215 (YDLEANLACL…EKIEFDNLAP (170 aa)) enclose the PCI domain.

This sequence belongs to the eIF-3 subunit K family. In terms of assembly, component of the eukaryotic translation initiation factor 3 (eIF-3) complex.

Its subcellular location is the cytoplasm. Its function is as follows. Component of the eukaryotic translation initiation factor 3 (eIF-3) complex, which is involved in protein synthesis of a specialized repertoire of mRNAs and, together with other initiation factors, stimulates binding of mRNA and methionyl-tRNAi to the 40S ribosome. The eIF-3 complex specifically targets and initiates translation of a subset of mRNAs involved in cell proliferation. The polypeptide is Eukaryotic translation initiation factor 3 subunit K (Anopheles gambiae (African malaria mosquito)).